A 483-amino-acid chain; its full sequence is Protein EFFECTOR OF TRANSCRIPTION 2 (483 aa).

One can recognise a GIY-YIG domain in the interval 64 to 112 (SCPGLYELGVAVIGQEQCRKLEPDIVLASYLGQAESVRSRLQRYGRSGA). Cx9Cx9RCx2HK repeat units follow at residues 278-303 (CGVL…IEHK) and 338-363 (CGVI…EDHK). Positions 380–396 (EKTVKDEKPDPESHTES) are enriched in basic and acidic residues. Residues 380–399 (EKTVKDEKPDPESHTESIEE) form a disordered region. 2 Cx9Cx9RCx2HK repeats span residues 406 to 431 (CEAT…WQHK) and 453 to 478 (CGVK…EEHK).

Expressed in vascular tissues of stems, hypocotyls, leaves and flowers. Expressed in the vascular bundles of xylem in shoot parenchyma cells. Expressed in the remnant cytoplasm of differentiated fiber cells and in protoxylem element of parenchymal cells.

The protein resides in the cytoplasm. The protein localises to the nucleus. Functionally, transcriptional regulator involved in the regulation of cell differentiation in meristems. Probably regulates the expression of various KNAT genes involved in the maintenance of the cells in an undifferentiated, merismastic state. Plays a role in the regulation of gibberellin 20 oxidase and the gibberellin-regulated protein GASA4. Localizes in the nucleus during the cellular differentiation state and may act via a single strand cutting domain. Transcriptional regulator required for the induction of dormancy during late seed development. Interacts genetically with FUS3 and may be component of the same regulatory pathway during embryogenesis. Binds both linear and supercoiled DNA without sequence preference. This Arabidopsis thaliana (Mouse-ear cress) protein is Protein EFFECTOR OF TRANSCRIPTION 2.